The following is a 301-amino-acid chain: MMNHARGVENRSEGGGIDVVLVTGLSGAGRGTAAKVLEDLGWYVADNLPPQLITRMVDFGLAAGSRITQLAVVMDVRSRGFTGDLDSVRNELATRAITPRVVFMEASDDTLVRRYEQNRRSHPLQGEQTLAEGIAAERRMLAPVRATADLIIDTSTLSVGGLRDSIERAFGGDGGATTSVTVESFGFKYGLPMDADMVMDVRFLPNPHWVDELRPLTGQHPAVRDYVLHRPGAAEFLESYHRLLSLVVDGYRREGKRYMTIAIGCTGGKHRSVAIAEALMGLLRSDQQLSVRALHRDLGRE.

24-31 is a binding site for ATP; that stretch reads GLSGAGRG. Position 75-78 (75-78) interacts with GTP; sequence DVRS.

Belongs to the RapZ-like family.

Displays ATPase and GTPase activities. The sequence is that of Nucleotide-binding protein Mb1456 from Mycobacterium bovis (strain ATCC BAA-935 / AF2122/97).